Consider the following 670-residue polypeptide: MNDAQALARIEELNKVLHYHNNLYYQKDTTEISDFEFDTLLQELIELEKQFPLYLKADSPSQRVGGTVTKEFASISHKYPMLSLSNTYSEEEIREFDERVQKAVGHAVEYVCEMKFDGVAISITYKNGMIAQAVTRGDGVRGDDVTNNIKTIKSIPLKIQSATFPEEFEVRGEVYLPYEMFERINQEREDIGEAALANPRNAASGTVKMQDSGIVAKRALDCFIYSLLQDSNKQPTHAAALAQLKEWGFRVSDSYKVCKNVDEIIQYINHWSEERFKLPLATDGIVIKVNDLRLQSELGMTAKSPRWAIAYKFKAEEASTPILSVEYQVGRTGAVTPVANLAPVHLAGTTVKRATLHNANEMERLNLHIGDTVFVEKGGEIIPKITRVDVSKRIAGSQMIPFIQNCPVCDTKLIRIEGEAAWYCPNDKGCAPQITGKIEHFIQRKAMNIDGIGSETIELLYQKKLIRNVADLYTLTYDQLIQLDRFGEKSVTNVLNGIEASKQTPFKSVLFAIGIRYVGSTVAEKLALHFKSINALEKASIEELLQAPEIGIKIAQSIIEWFSVDTNVQLIEDLKKAGVKLELSEHEILKPESDKFAGKSFVISGVFENYERDELKDLILKNGGKISSGITGKLNYLVAGENMGPAKLEKAQKLNITILSEAEFISLLNS.

Residues 34 to 38, 83 to 84, and E113 each bind NAD(+); these read DFEFD and SL. K115 functions as the N6-AMP-lysine intermediate in the catalytic mechanism. NAD(+)-binding residues include R136, E173, K288, and K312. Zn(2+) is bound by residues C406, C409, C424, and C430. The BRCT domain occupies 591–670; the sequence is PESDKFAGKS…EAEFISLLNS (80 aa).

It belongs to the NAD-dependent DNA ligase family. LigA subfamily. It depends on Mg(2+) as a cofactor. The cofactor is Mn(2+).

The enzyme catalyses NAD(+) + (deoxyribonucleotide)n-3'-hydroxyl + 5'-phospho-(deoxyribonucleotide)m = (deoxyribonucleotide)n+m + AMP + beta-nicotinamide D-nucleotide.. In terms of biological role, DNA ligase that catalyzes the formation of phosphodiester linkages between 5'-phosphoryl and 3'-hydroxyl groups in double-stranded DNA using NAD as a coenzyme and as the energy source for the reaction. It is essential for DNA replication and repair of damaged DNA. This is DNA ligase from Cytophaga hutchinsonii (strain ATCC 33406 / DSM 1761 / CIP 103989 / NBRC 15051 / NCIMB 9469 / D465).